A 507-amino-acid chain; its full sequence is ATP synthase subunit alpha, plastid (507 aa).

G170–T177 is a binding site for ATP.

It belongs to the ATPase alpha/beta chains family. As to quaternary structure, F-type ATPases have 2 components, CF(1) - the catalytic core - and CF(0) - the membrane proton channel. CF(1) has five subunits: alpha(3), beta(3), gamma(1), delta(1), epsilon(1). CF(0) has four main subunits: a, b, b' and c.

It is found in the plastid membrane. The catalysed reaction is ATP + H2O + 4 H(+)(in) = ADP + phosphate + 5 H(+)(out). Functionally, produces ATP from ADP in the presence of a proton gradient across the membrane. The alpha chain is a regulatory subunit. This Cuscuta obtusiflora (Peruvian dodder) protein is ATP synthase subunit alpha, plastid.